A 226-amino-acid chain; its full sequence is MNESLFTPFITPTVLGLPAAVLVILFPPLLIPTSKHLINNRLIIIQQWLIRLILKQMMTTHNAKGRTWSLMLTSLIIFIASTNLLGLLPYSFTPTTQLSMNLAMAIPLWASTVAMGLRFKAKITLTHLLPQGTPTPLIPMLIIIETVSLFIQPLALAVRLTANITAGHLLMHLIGSSALAMLAINLPLTLITLTILTLLTILETAIALIQAYVFTLLVSLYLHDNS.

The next 6 membrane-spanning stretches (helical) occupy residues 12–32 (PTVLGLPAAVLVILFPPLLIP), 68–88 (WSLMLTSLIIFIASTNLLGLL), 97–117 (QLSMNLAMAIPLWASTVAMGL), 138–158 (IPMLIIIETVSLFIQPLALAV), 182–202 (LAINLPLTLITLTILTLLTIL), and 203–223 (ETAIALIQAYVFTLLVSLYLH).

Belongs to the ATPase A chain family. Component of the ATP synthase complex composed at least of ATP5F1A/subunit alpha, ATP5F1B/subunit beta, ATP5MC1/subunit c (homooctomer), MT-ATP6/subunit a, MT-ATP8/subunit 8, ATP5ME/subunit e, ATP5MF/subunit f, ATP5MG/subunit g, ATP5MK/subunit k, ATP5MJ/subunit j, ATP5F1C/subunit gamma, ATP5F1D/subunit delta, ATP5F1E/subunit epsilon, ATP5PF/subunit F6, ATP5PB/subunit b, ATP5PD/subunit d, ATP5PO/subunit OSCP. ATP synthase complex consists of a soluble F(1) head domain (subunits alpha(3) and beta(3)) - the catalytic core - and a membrane F(0) domain - the membrane proton channel (subunits c, a, 8, e, f, g, k and j). These two domains are linked by a central stalk (subunits gamma, delta, and epsilon) rotating inside the F1 region and a stationary peripheral stalk (subunits F6, b, d, and OSCP). Interacts with DNAJC30; interaction is direct.

It localises to the mitochondrion inner membrane. It carries out the reaction H(+)(in) = H(+)(out). In terms of biological role, subunit a, of the mitochondrial membrane ATP synthase complex (F(1)F(0) ATP synthase or Complex V) that produces ATP from ADP in the presence of a proton gradient across the membrane which is generated by electron transport complexes of the respiratory chain. ATP synthase complex consist of a soluble F(1) head domain - the catalytic core - and a membrane F(1) domain - the membrane proton channel. These two domains are linked by a central stalk rotating inside the F(1) region and a stationary peripheral stalk. During catalysis, ATP synthesis in the catalytic domain of F(1) is coupled via a rotary mechanism of the central stalk subunits to proton translocation. With the subunit c (ATP5MC1), forms the proton-conducting channel in the F(0) domain, that contains two crucial half-channels (inlet and outlet) that facilitate proton movement from the mitochondrial intermembrane space (IMS) into the matrix. Protons are taken up via the inlet half-channel and released through the outlet half-channel, following a Grotthuss mechanism. The protein is ATP synthase F(0) complex subunit a of Pongo abelii (Sumatran orangutan).